The sequence spans 447 residues: Probable glycine dehydrogenase (decarboxylating) subunit 1 (447 aa).

It belongs to the GcvP family. N-terminal subunit subfamily. In terms of assembly, the glycine cleavage system is composed of four proteins: P, T, L and H. In this organism, the P 'protein' is a heterodimer of two subunits.

The enzyme catalyses N(6)-[(R)-lipoyl]-L-lysyl-[glycine-cleavage complex H protein] + glycine + H(+) = N(6)-[(R)-S(8)-aminomethyldihydrolipoyl]-L-lysyl-[glycine-cleavage complex H protein] + CO2. The glycine cleavage system catalyzes the degradation of glycine. The P protein binds the alpha-amino group of glycine through its pyridoxal phosphate cofactor; CO(2) is released and the remaining methylamine moiety is then transferred to the lipoamide cofactor of the H protein. The sequence is that of Probable glycine dehydrogenase (decarboxylating) subunit 1 from Bacillus cereus (strain G9842).